The primary structure comprises 216 residues: Adenylate kinase (216 aa).

Position 13 to 18 (13 to 18) interacts with ATP; that stretch reads GAGKGT. The NMP stretch occupies residues 33 to 66; it reads TTGDALRANKTKDITHLDVEYDTPGAYMDAGELV. Residues T34, R39, 64-66, 89-92, and Q96 each bind AMP; these read ELV and GYPR. The segment at 125–162 is LID; it reads GRRVCEDCGATFHVSFNQPETEGVCDACGGSLYQREDD. An ATP-binding site is contributed by R126. 2 residues coordinate Zn(2+): C129 and C132. ATP is bound at residue 135 to 136; the sequence is TF. The Zn(2+) site is built by C149 and C152. Residues R159 and R170 each contribute to the AMP site. An ATP-binding site is contributed by R198.

It belongs to the adenylate kinase family. As to quaternary structure, monomer.

The protein resides in the cytoplasm. It carries out the reaction AMP + ATP = 2 ADP. It participates in purine metabolism; AMP biosynthesis via salvage pathway; AMP from ADP: step 1/1. In terms of biological role, catalyzes the reversible transfer of the terminal phosphate group between ATP and AMP. Plays an important role in cellular energy homeostasis and in adenine nucleotide metabolism. This Halobacterium salinarum (strain ATCC 700922 / JCM 11081 / NRC-1) (Halobacterium halobium) protein is Adenylate kinase.